Here is a 199-residue protein sequence, read N- to C-terminus: Holliday junction branch migration complex subunit RuvA (199 aa).

The interval 1–64 (MIGRLRGILL…DDAHLLYAFA (64 aa)) is domain I. The tract at residues 65–143 (SEKERGLFRS…DMPESGVAGM (79 aa)) is domain II. The segment at 144–150 (RPDRVDG) is flexible linker. The interval 151–199 (SAPGTVAEAVSALVALGYKPNEASRAVRRLDTEALTTEEIIRQALQRML) is domain III.

It belongs to the RuvA family. As to quaternary structure, homotetramer. Forms an RuvA(8)-RuvB(12)-Holliday junction (HJ) complex. HJ DNA is sandwiched between 2 RuvA tetramers; dsDNA enters through RuvA and exits via RuvB. An RuvB hexamer assembles on each DNA strand where it exits the tetramer. Each RuvB hexamer is contacted by two RuvA subunits (via domain III) on 2 adjacent RuvB subunits; this complex drives branch migration. In the full resolvosome a probable DNA-RuvA(4)-RuvB(12)-RuvC(2) complex forms which resolves the HJ.

The protein resides in the cytoplasm. Functionally, the RuvA-RuvB-RuvC complex processes Holliday junction (HJ) DNA during genetic recombination and DNA repair, while the RuvA-RuvB complex plays an important role in the rescue of blocked DNA replication forks via replication fork reversal (RFR). RuvA specifically binds to HJ cruciform DNA, conferring on it an open structure. The RuvB hexamer acts as an ATP-dependent pump, pulling dsDNA into and through the RuvAB complex. HJ branch migration allows RuvC to scan DNA until it finds its consensus sequence, where it cleaves and resolves the cruciform DNA. This is Holliday junction branch migration complex subunit RuvA from Nitrosococcus oceani (strain ATCC 19707 / BCRC 17464 / JCM 30415 / NCIMB 11848 / C-107).